Here is a 65-residue protein sequence, read N- to C-terminus: UPF0337 protein BCE_1081 (65 aa).

The disordered stretch occupies residues 1–28 (MSGGLKEQITGKVEKTKGQVKEGIGEVT). Basic and acidic residues predominate over residues 12-28 (KVEKTKGQVKEGIGEVT).

This sequence belongs to the UPF0337 (CsbD) family.

The polypeptide is UPF0337 protein BCE_1081 (Bacillus cereus (strain ATCC 10987 / NRS 248)).